The chain runs to 732 residues: Elongation factor 2 (732 aa).

The 242-residue stretch at 19–260 folds into the tr-type G domain; that stretch reads ERIRNMGIAA…MVVKHLPNPL (242 aa). Residues 28-35, 94-98, and 148-151 each bind GTP; these read AHIDHGKT, DTPGH, and NKVD. At His-597 the chain carries Diphthamide.

Belongs to the TRAFAC class translation factor GTPase superfamily. Classic translation factor GTPase family. EF-G/EF-2 subfamily.

It is found in the cytoplasm. Functionally, catalyzes the GTP-dependent ribosomal translocation step during translation elongation. During this step, the ribosome changes from the pre-translocational (PRE) to the post-translocational (POST) state as the newly formed A-site-bound peptidyl-tRNA and P-site-bound deacylated tRNA move to the P and E sites, respectively. Catalyzes the coordinated movement of the two tRNA molecules, the mRNA and conformational changes in the ribosome. The polypeptide is Elongation factor 2 (Thermococcus kodakarensis (strain ATCC BAA-918 / JCM 12380 / KOD1) (Pyrococcus kodakaraensis (strain KOD1))).